A 503-amino-acid chain; its full sequence is Maturase K (503 aa).

It belongs to the intron maturase 2 family. MatK subfamily.

It localises to the plastid. It is found in the chloroplast. Functionally, usually encoded in the trnK tRNA gene intron. Probably assists in splicing its own and other chloroplast group II introns. This is Maturase K from Liquidambar styraciflua (Sweetgum tree).